The following is a 216-amino-acid chain: Small ribosomal subunit protein uS3 (216 aa).

The KH type-2 domain maps to 39-111 (IYKFFDKLVR…DINLQVSLLK (73 aa)).

It belongs to the universal ribosomal protein uS3 family. Part of the 30S ribosomal subunit. Forms a tight complex with proteins S10 and S14.

In terms of biological role, binds the lower part of the 30S subunit head. Binds mRNA in the 70S ribosome, positioning it for translation. The polypeptide is Small ribosomal subunit protein uS3 (Mycoplasmopsis agalactiae (strain NCTC 10123 / CIP 59.7 / PG2) (Mycoplasma agalactiae)).